The sequence spans 349 residues: Anthranilate phosphoribosyltransferase (349 aa).

5-phospho-alpha-D-ribose 1-diphosphate-binding positions include glycine 86, 89-90 (GD), threonine 94, 96-99 (NIST), 114-122 (KHGNKSASG), and serine 126. Glycine 86 is an anthranilate binding site. Serine 98 contacts Mg(2+). Asparagine 117 provides a ligand contact to anthranilate. Arginine 172 provides a ligand contact to anthranilate. Residues aspartate 231 and glutamate 232 each contribute to the Mg(2+) site.

Belongs to the anthranilate phosphoribosyltransferase family. In terms of assembly, homodimer. Mg(2+) serves as cofactor.

It catalyses the reaction N-(5-phospho-beta-D-ribosyl)anthranilate + diphosphate = 5-phospho-alpha-D-ribose 1-diphosphate + anthranilate. It participates in amino-acid biosynthesis; L-tryptophan biosynthesis; L-tryptophan from chorismate: step 2/5. In terms of biological role, catalyzes the transfer of the phosphoribosyl group of 5-phosphorylribose-1-pyrophosphate (PRPP) to anthranilate to yield N-(5'-phosphoribosyl)-anthranilate (PRA). This is Anthranilate phosphoribosyltransferase from Prochlorococcus marinus (strain MIT 9312).